Consider the following 441-residue polypeptide: EMI domain-containing protein 1 (441 aa).

Residues 1–22 (MGGPRAWALLCLGLLLPGGGAA) form the signal peptide. An EMI domain is found at 33–106 (RRNWCSYVVT…PGHSGVSCEE (74 aa)). 3 disulfide bridges follow: Cys37/Cys96, Cys62/Cys68, and Cys95/Cys104. A glycan (O-linked (Fuc) threonine) is linked at Thr42. Residue Asn51 is glycosylated (N-linked (GlcNAc...) asparagine). N-linked (GlcNAc...) asparagine glycosylation is present at Asn136. 2 disordered regions span residues 162 to 371 (QPVP…KSHW) and 405 to 441 (SGAG…DERG). 2 stretches are compositionally biased toward pro residues: residues 163-184 (PVPP…PPAQ) and 222-231 (PPGPQGPPGS). Residues 179–368 (GPPPAQGSPG…PGPKGDPGEK (190 aa)) enclose the Collagen-like domain. The span at 232 to 243 (PGRAGAVGTPGE) shows a compositional bias: low complexity. Pro residues predominate over residues 244-264 (RGPPGPPGPPGPPGPPAPVGP). The segment covering 277–288 (LSNTFTETNNHW) has biased composition (polar residues). Residues 292-311 (PTGPPGPPGPMGPPGPPGPT) show a composition bias toward pro residues. 2 stretches are compositionally biased toward basic and acidic residues: residues 335-344 (PGEKGERGLR) and 359-371 (PGPK…KSHW).

Homo- or heteromers. In terms of processing, O-fucosylated at Thr-42 within the EMI domain by FUT10/POFUT3 and FUT11/POFUT4.

The protein localises to the secreted. Its subcellular location is the extracellular space. It is found in the extracellular matrix. The polypeptide is EMI domain-containing protein 1 (EMID1) (Homo sapiens (Human)).